A 1921-amino-acid polypeptide reads, in one-letter code: Mediator of RNA polymerase II transcription subunit 13 (1921 aa).

Glycyl lysine isopeptide (Lys-Gly) (interchain with G-Cter in ubiquitin) cross-links involve residues lysine 220 and lysine 226. Disordered stretches follow at residues 400–434 (YEKNGYNSSGSSRNSSISSTSSASSGSGWRMTSRT), 702–724 (TQVEGRKGRHDKLPTVISDNSST), and 1485–1528 (SPTF…GDVS). Low complexity predominate over residues 407–427 (SSGSSRNSSISSTSSASSGSG). Polar residues-rich tracts occupy residues 1486-1496 (PTFTSLGSESS) and 1515-1527 (EGITSGSSSQGDV).

This sequence belongs to the Mediator complex subunit 13 family. In terms of assembly, component of the Mediator complex. Interacts with CYCC1-2 (CDK8 homolog). In terms of tissue distribution, ubiquitous. Highest expression in the shoot apex.

It is found in the nucleus. In terms of biological role, component of the Mediator complex, a coactivator involved in the regulated transcription of nearly all RNA polymerase II-dependent genes. Mediator functions as a bridge to convey information from gene-specific regulatory proteins to the basal RNA polymerase II transcription machinery. The Mediator complex, having a compact conformation in its free form, is recruited to promoters by direct interactions with regulatory proteins and serves for the assembly of a functional preinitiation complex with RNA polymerase II and the general transcription factors. Acts closely together with MAB12. Involved in the regulation of embryo patterning and cotyledon organogenesis. May act through transient repression of specific genes such as the ones responsive to auxin. This is Mediator of RNA polymerase II transcription subunit 13 (MED13) from Arabidopsis thaliana (Mouse-ear cress).